The following is a 406-amino-acid chain: Trk system potassium uptake protein trkA homolog 1 (406 aa).

The 124-residue stretch at Met-1–Ile-124 folds into the RCK N-terminal 1 domain. Residues Gly-7 to Val-11, Asp-29, Thr-70 to Gly-71, and Arg-101 contribute to the NAD(+) site. The RCK C-terminal domain occupies Ile-144 to Ser-225. The RCK N-terminal 2 domain occupies Arg-230–Val-348. NAD(+) is bound at residue Arg-232 to His-262.

Functionally, part of a potassium transport system. The polypeptide is Trk system potassium uptake protein trkA homolog 1 (trkA1) (Methanosarcina mazei (Methanosarcina frisia)).